Consider the following 83-residue polypeptide: Putative defensin-like protein 110 (83 aa).

An N-terminal signal peptide occupies residues Met1 to Cys24. 4 disulfides stabilise this stretch: Cys43-Cys81, Cys49-Cys73, Cys59-Cys79, and Cys63-Cys80.

This sequence belongs to the DEFL family.

It localises to the secreted. This Arabidopsis thaliana (Mouse-ear cress) protein is Putative defensin-like protein 110.